A 592-amino-acid chain; its full sequence is Arginine--tRNA ligase (592 aa).

Residues 129 to 139 (ANPTGPLHVGH) carry the 'HIGH' region motif.

Belongs to the class-I aminoacyl-tRNA synthetase family. In terms of assembly, monomer.

Its subcellular location is the cytoplasm. The catalysed reaction is tRNA(Arg) + L-arginine + ATP = L-arginyl-tRNA(Arg) + AMP + diphosphate. This Dichelobacter nodosus (strain VCS1703A) protein is Arginine--tRNA ligase.